The sequence spans 735 residues: Glutamine-dependent NAD(+) synthetase (735 aa).

The 271-residue stretch at 4–274 (LRVATCNLNQ…VEVLDALVDL (271 aa)) folds into the CN hydrolase domain. Glu-44 acts as the Proton acceptor; for glutaminase activity in catalysis. Catalysis depends on Lys-113, which acts as the For glutaminase activity. Cys-174 acts as the Nucleophile; for glutaminase activity in catalysis. The interval 324 to 711 (YHRPEEEIAF…STEGELRRRK (388 aa)) is ligase. 354 to 361 (PLSGGADS) is an ATP binding site. Ser-356 is an active-site residue.

This sequence in the C-terminal section; belongs to the NAD synthetase family.

The catalysed reaction is deamido-NAD(+) + L-glutamine + ATP + H2O = L-glutamate + AMP + diphosphate + NAD(+) + H(+). It functions in the pathway cofactor biosynthesis; NAD(+) biosynthesis; NAD(+) from deamido-NAD(+) (L-Gln route): step 1/1. This chain is Glutamine-dependent NAD(+) synthetase, found in Oryza sativa subsp. indica (Rice).